The chain runs to 938 residues: Protein translocase subunit SecA (938 aa).

ATP contacts are provided by residues Gln-90, 108–112 (GEGKT), and Asp-504.

Belongs to the SecA family. Monomer and homodimer. Part of the essential Sec protein translocation apparatus which comprises SecA, SecYEG and auxiliary proteins SecDF. Other proteins may also be involved.

The protein resides in the cell inner membrane. Its subcellular location is the cellular thylakoid membrane. It localises to the cytoplasm. The enzyme catalyses ATP + H2O + cellular proteinSide 1 = ADP + phosphate + cellular proteinSide 2.. Part of the Sec protein translocase complex. Interacts with the SecYEG preprotein conducting channel. Has a central role in coupling the hydrolysis of ATP to the transfer of proteins into and across the cell membrane, serving as an ATP-driven molecular motor driving the stepwise translocation of polypeptide chains across the membrane. Its function is as follows. Probably participates in protein translocation into and across both the cytoplasmic and thylakoid membranes in cyanobacterial cells. The polypeptide is Protein translocase subunit SecA (Microcystis aeruginosa (strain NIES-843 / IAM M-2473)).